The chain runs to 220 residues: ATP-dependent Clp protease proteolytic subunit (220 aa).

Ser-122 acts as the Nucleophile in catalysis. Residue His-147 is part of the active site.

It belongs to the peptidase S14 family. As to quaternary structure, fourteen ClpP subunits assemble into 2 heptameric rings which stack back to back to give a disk-like structure with a central cavity, resembling the structure of eukaryotic proteasomes.

It is found in the cytoplasm. The enzyme catalyses Hydrolysis of proteins to small peptides in the presence of ATP and magnesium. alpha-casein is the usual test substrate. In the absence of ATP, only oligopeptides shorter than five residues are hydrolyzed (such as succinyl-Leu-Tyr-|-NHMec, and Leu-Tyr-Leu-|-Tyr-Trp, in which cleavage of the -Tyr-|-Leu- and -Tyr-|-Trp bonds also occurs).. Cleaves peptides in various proteins in a process that requires ATP hydrolysis. Has a chymotrypsin-like activity. Plays a major role in the degradation of misfolded proteins. This chain is ATP-dependent Clp protease proteolytic subunit, found in Colwellia psychrerythraea (strain 34H / ATCC BAA-681) (Vibrio psychroerythus).